A 122-amino-acid chain; its full sequence is Large ribosomal subunit protein uL14 (122 aa).

This sequence belongs to the universal ribosomal protein uL14 family. As to quaternary structure, part of the 50S ribosomal subunit. Forms a cluster with proteins L3 and L19. In the 70S ribosome, L14 and L19 interact and together make contacts with the 16S rRNA in bridges B5 and B8.

Binds to 23S rRNA. Forms part of two intersubunit bridges in the 70S ribosome. The polypeptide is Large ribosomal subunit protein uL14 (Rickettsia africae (strain ESF-5)).